Here is a 220-residue protein sequence, read N- to C-terminus: tRNA (guanine-N(7)-)-methyltransferase (220 aa).

The S-adenosyl-L-methionine site is built by glutamate 46, aspartate 71, aspartate 100, and aspartate 122. Aspartate 122 is an active-site residue. Residues lysine 126, aspartate 158, and 196 to 199 (TEYE) each bind substrate.

The protein belongs to the class I-like SAM-binding methyltransferase superfamily. TrmB family.

It carries out the reaction guanosine(46) in tRNA + S-adenosyl-L-methionine = N(7)-methylguanosine(46) in tRNA + S-adenosyl-L-homocysteine. Its pathway is tRNA modification; N(7)-methylguanine-tRNA biosynthesis. In terms of biological role, catalyzes the formation of N(7)-methylguanine at position 46 (m7G46) in tRNA. The protein is tRNA (guanine-N(7)-)-methyltransferase of Malacoplasma penetrans (strain HF-2) (Mycoplasma penetrans).